Consider the following 250-residue polypeptide: Ribosomal RNA small subunit methyltransferase J (250 aa).

S-adenosyl-L-methionine is bound by residues 101–102, 117–118, 153–154, and Asp-171; these read RD, ER, and SS.

The protein belongs to the methyltransferase superfamily. RsmJ family.

The protein resides in the cytoplasm. The enzyme catalyses guanosine(1516) in 16S rRNA + S-adenosyl-L-methionine = N(2)-methylguanosine(1516) in 16S rRNA + S-adenosyl-L-homocysteine + H(+). Specifically methylates the guanosine in position 1516 of 16S rRNA. This Escherichia coli (strain SMS-3-5 / SECEC) protein is Ribosomal RNA small subunit methyltransferase J.